Consider the following 325-residue polypeptide: Prenytransferase adrG (325 aa).

A run of 7 helical transmembrane segments spans residues 47–67 (LVGVAFSASISSTKIPIAVLL), 71–91 (MLLSIWSIFLRSAGCVWDDLI), 117–137 (ALLLTVALFACGGTVLIFLPW), 163–183 (PQITLMNIGWAVPMAMHSLGL), 189–209 (MTPTVCMFLFIGSVIIMIDVI), 236–256 (LLSYSLLCASTGFLAMAGVLT), and 258–278 (LGLPFFVLSVGGHFCGFWVLL).

Belongs to the UbiA prenyltransferase family. Mg(2+) serves as cofactor.

The protein localises to the membrane. The enzyme catalyses 3,5-dimethylorsellinate + (2E,6E)-farnesyl diphosphate = (3R)-3-farnesyl-6-hydroxy-2,3,5-trimethyl-4-oxocyclohexa-1,5-diene-1-carboxylate + diphosphate + H(+). The protein operates within secondary metabolite biosynthesis; terpenoid biosynthesis. Functionally, prenytransferase; part of the gene cluster that mediates the biosynthesis of andrastins, meroterpenoid compounds that exhibit inhibitory activity against ras farnesyltransferase, suggesting that they could be promising leads for antitumor agents. The first step of the pathway is the synthesis of 3,5-dimethylorsellinic acid (DMOA) by the polyketide synthase adrD via condensation of one acetyl-CoA starter unit with 3 malonyl-CoA units and 2 methylations. DMAO is then converted to farnesyl-DMAO by the prenyltransferase adrG. The methyltransferase adrK catalyzes the methylation of the carboxyl group of farnesyl-DMAO to farnesyl-DMAO methyl ester which is further converted to epoxyfarnesyl-DMAO methyl ester by the FAD-dependent monooxygenase adrH. The terpene cyclase adrI then catalyzes the carbon skeletal rearrangement to generate the andrastin E, the first compound in the pathway having the andrastin scaffold, with the tetracyclic ring system. The post-cyclization tailoring enzymes adrF, adrE, adrJ, and adrA, are involved in the conversion of andrastin E into andrastin A. The short chain dehydrogenase adrF is responsible for the oxidation of the C-3 a hydroxyl group of andrastin E to yield the corresponding ketone, andrastin D. The ketoreductase adrE stereoselectively reduces the carbonyl moiety to reverse the stereochemistry of the C-3 position to yield andrastin F. The acetyltransferase adrJ is the acetyltransferase that attaches the acetyl group to the C-3 hydroxyl group of andrastin F to yield andrastin C. Finally, the cytochrome P450 monooxygenase adrA catalyzes two sequential oxidation reactions of the C-23 methyl group, to generate the corresponding alcohol andrastin B, and aldehyde andrastin A. The protein is Prenytransferase adrG of Penicillium rubens (strain ATCC 28089 / DSM 1075 / NRRL 1951 / Wisconsin 54-1255) (Penicillium chrysogenum).